The chain runs to 292 residues: UPF0696 protein C11orf68 homolog (292 aa).

Over residues 1–10 the composition is skewed to low complexity; sequence MAAAAAAVAG. The tract at residues 1 to 60 is disordered; it reads MAAAAAAVAGAGRGGGGGAEPRQERSRARGWAGAERSEGRRMEPGEELEEEDSPGGREDG. Residues 35-44 are compositionally biased toward basic and acidic residues; it reads ERSEGRRMEP.

Belongs to the UPF0696 family.

In Bos taurus (Bovine), this protein is UPF0696 protein C11orf68 homolog.